An 848-amino-acid polypeptide reads, in one-letter code: Oligopeptide transport ATP-binding protein OppF (848 aa).

The ABC transporter domain maps to Val-13–Ile-785. Residue Gly-47–Ser-54 participates in ATP binding.

Belongs to the ABC transporter superfamily. The complex is composed of two ATP-binding proteins (OppD and OppF), two transmembrane proteins (OppB and OppC) and a solute-binding protein (OppA).

Its subcellular location is the cell membrane. It carries out the reaction a [peptide](out) + ATP + H2O = a [peptide](in) + ADP + phosphate + H(+). Part of the ABC transporter complex OppABCDF involved in the uptake of oligopeptides. Probably responsible for energy coupling to the transport system. This Mycoplasma genitalium (strain ATCC 33530 / DSM 19775 / NCTC 10195 / G37) (Mycoplasmoides genitalium) protein is Oligopeptide transport ATP-binding protein OppF (oppF).